The primary structure comprises 251 residues: Hydroxyacylglutathione hydrolase (251 aa).

Residues H53, H55, D57, H58, H110, D127, and H165 each contribute to the Zn(2+) site.

The protein belongs to the metallo-beta-lactamase superfamily. Glyoxalase II family. Monomer. Requires Zn(2+) as cofactor.

The enzyme catalyses an S-(2-hydroxyacyl)glutathione + H2O = a 2-hydroxy carboxylate + glutathione + H(+). It functions in the pathway secondary metabolite metabolism; methylglyoxal degradation; (R)-lactate from methylglyoxal: step 2/2. Functionally, thiolesterase that catalyzes the hydrolysis of S-D-lactoyl-glutathione to form glutathione and D-lactic acid. This is Hydroxyacylglutathione hydrolase from Enterobacter sp. (strain 638).